We begin with the raw amino-acid sequence, 122 residues long: MALTNEDIINAVSEMSVMQVVELIKAMEEKFGVTAAAATVAAAGPAAAAAEEQTEFTIVLAEAGDKKVNVIKVVRELTGLGLKEAKAVVDGAPGVVKEGASKEEAEAAKKALEEAGAKVELK.

The protein belongs to the bacterial ribosomal protein bL12 family. In terms of assembly, homodimer. Part of the ribosomal stalk of the 50S ribosomal subunit. Forms a multimeric L10(L12)X complex, where L10 forms an elongated spine to which 2 to 4 L12 dimers bind in a sequential fashion. Binds GTP-bound translation factors.

In terms of biological role, forms part of the ribosomal stalk which helps the ribosome interact with GTP-bound translation factors. Is thus essential for accurate translation. The chain is Large ribosomal subunit protein bL12 from Pseudomonas aeruginosa (strain LESB58).